Reading from the N-terminus, the 423-residue chain is Putative galacturan 1,4-alpha-galacturonidase C (423 aa).

An N-terminal signal peptide occupies residues 1–20; it reads MRFSIISLVSLPLFLGLTYA. N-linked (GlcNAc...) asparagine glycosylation is found at Asn100, Asn120, Asn150, Asn173, and Asn185. Asp229 acts as the Proton donor in catalysis. An intrachain disulfide couples Cys231 to Cys248. Asn245 is a glycosylation site (N-linked (GlcNAc...) asparagine). Asn252 is a catalytic residue. Asn344 and Asn362 each carry an N-linked (GlcNAc...) asparagine glycan. Cysteines 379 and 385 form a disulfide. Residue Asn400 is glycosylated (N-linked (GlcNAc...) asparagine). Cys409 and Cys423 are oxidised to a cystine.

It belongs to the glycosyl hydrolase 28 family.

The protein resides in the secreted. The enzyme catalyses [(1-&gt;4)-alpha-D-galacturonosyl](n) + H2O = alpha-D-galacturonate + [(1-&gt;4)-alpha-D-galacturonosyl](n-1). In terms of biological role, specific in hydrolyzing the terminal glycosidic bond of polygalacturonic acid and oligogalacturonates. The protein is Putative galacturan 1,4-alpha-galacturonidase C (rgxC) of Neosartorya fischeri (strain ATCC 1020 / DSM 3700 / CBS 544.65 / FGSC A1164 / JCM 1740 / NRRL 181 / WB 181) (Aspergillus fischerianus).